The sequence spans 35 residues: Augerpeptide hheTx5 (35 aa).

Contains 4 disulfide bonds. In terms of tissue distribution, expressed by the venom duct.

Its subcellular location is the secreted. The protein is Augerpeptide hheTx5 of Hastula hectica (Sea snail).